Consider the following 335-residue polypeptide: tRNA N6-adenosine threonylcarbamoyltransferase (335 aa).

2 residues coordinate Fe cation: His-111 and His-115. Substrate-binding positions include 133–137 (IISGG), Asp-166, Gly-179, Asp-183, and Asn-268. Asp-296 contributes to the Fe cation binding site.

It belongs to the KAE1 / TsaD family. Fe(2+) is required as a cofactor.

It is found in the cytoplasm. The catalysed reaction is L-threonylcarbamoyladenylate + adenosine(37) in tRNA = N(6)-L-threonylcarbamoyladenosine(37) in tRNA + AMP + H(+). Required for the formation of a threonylcarbamoyl group on adenosine at position 37 (t(6)A37) in tRNAs that read codons beginning with adenine. Is involved in the transfer of the threonylcarbamoyl moiety of threonylcarbamoyl-AMP (TC-AMP) to the N6 group of A37, together with TsaE and TsaB. TsaD likely plays a direct catalytic role in this reaction. This is tRNA N6-adenosine threonylcarbamoyltransferase from Aquifex aeolicus (strain VF5).